Here is a 340-residue protein sequence, read N- to C-terminus: Uroporphyrinogen decarboxylase (340 aa).

Residues 21 to 25, Asp71, Tyr147, Ser202, and His316 each bind substrate; that span reads RQAGR.

This sequence belongs to the uroporphyrinogen decarboxylase family. In terms of assembly, homodimer.

Its subcellular location is the cytoplasm. The enzyme catalyses uroporphyrinogen III + 4 H(+) = coproporphyrinogen III + 4 CO2. Its pathway is porphyrin-containing compound metabolism; protoporphyrin-IX biosynthesis; coproporphyrinogen-III from 5-aminolevulinate: step 4/4. Functionally, catalyzes the decarboxylation of four acetate groups of uroporphyrinogen-III to yield coproporphyrinogen-III. This chain is Uroporphyrinogen decarboxylase, found in Nitratiruptor sp. (strain SB155-2).